A 156-amino-acid chain; its full sequence is Small ribosomal subunit protein uS7 (156 aa).

Belongs to the universal ribosomal protein uS7 family. As to quaternary structure, part of the 30S ribosomal subunit. Contacts proteins S9 and S11.

Functionally, one of the primary rRNA binding proteins, it binds directly to 16S rRNA where it nucleates assembly of the head domain of the 30S subunit. Is located at the subunit interface close to the decoding center, probably blocks exit of the E-site tRNA. The sequence is that of Small ribosomal subunit protein uS7 from Hamiltonella defensa subsp. Acyrthosiphon pisum (strain 5AT).